The chain runs to 331 residues: Cathepsin 7 (331 aa).

Positions 1-17 (MTVAVFLAILCLRAALA) are cleaved as a signal peptide. A propeptide spans 18-111 (APRPDYSLDA…GKHIQKRNVK (94 aa)) (activation peptide). The short motif at 33–50 (KRNNAKTYSPEEEKQRRA) is the Nuclear localization signal element. A glycan (N-linked (GlcNAc...) asparagine) is linked at Asn-72. 3 disulfides stabilise this stretch: Cys-133–Cys-176, Cys-167–Cys-209, and Cys-267–Cys-320. The active site involves Cys-136. Catalysis depends on residues His-274 and Asn-298.

It belongs to the peptidase C1 family.

It is found in the endosome. The protein localises to the lysosome. It localises to the cytoplasm. Its subcellular location is the perinuclear region. The protein resides in the golgi apparatus. It is found in the nucleus. The protein localises to the secreted. It localises to the extracellular space. In terms of biological role, involved in trophoblast cell proliferation and differentiation probably by affecting mitotic cell cycle progression. Proteolytic activity and nuclear localization are essential for its role in cell cycle progression. This is Cathepsin 7 (Cts7) from Rattus norvegicus (Rat).